Reading from the N-terminus, the 621-residue chain is Endoglucanase 25 (621 aa).

Residues M1–R26 form a disordered region. Over M1–K70 the chain is Cytoplasmic. A polarized targeting signal 1 (PTS1) region spans residues L48–L49. The polarized targeting signal 2 (PTS2) stretch occupies residues Y59–L62. Residues I71 to L91 traverse the membrane as a helical; Signal-anchor for type II membrane protein segment. Topologically, residues I92–P621 are extracellular. 2 N-linked (GlcNAc...) asparagine glycosylation sites follow: N108 and N133. Catalysis depends on D165, which acts as the Nucleophile. N216, N324, N345, N408, and N425 each carry an N-linked (GlcNAc...) asparagine glycan. Catalysis depends on residues H513 and D561. N-linked (GlcNAc...) asparagine glycosylation occurs at N567. Residue E570 is part of the active site.

This sequence belongs to the glycosyl hydrolase 9 (cellulase E) family. Post-translationally, glycosylated. N-glycosylation of KOR in the endoplasmic reticulum followed by N-glycan modifications in the Golgi are essential for catalytic activity. In terms of tissue distribution, highly expressed in roots and stems, at intermediate levels in leaves and flowers, and at lower levels in siliques. Expressed in xylem (at protein level).

It is found in the cell membrane. It catalyses the reaction Endohydrolysis of (1-&gt;4)-beta-D-glucosidic linkages in cellulose, lichenin and cereal beta-D-glucans.. Required for cellulose microfibril formation. Involved in cell wall assembly during cell elongation and cell plate maturation in cytokinesis. Required for secondary cell wall formation in the developing xylem. May cycle through different intracellular compartments, including plasma membrane. This Arabidopsis thaliana (Mouse-ear cress) protein is Endoglucanase 25 (KOR).